We begin with the raw amino-acid sequence, 242 residues long: Small ribosomal subunit protein uS2 (242 aa).

The protein belongs to the universal ribosomal protein uS2 family.

This chain is Small ribosomal subunit protein uS2, found in Shewanella frigidimarina (strain NCIMB 400).